We begin with the raw amino-acid sequence, 292 residues long: Acetyl-coenzyme A carboxylase carboxyl transferase subunit beta (292 aa).

A CoA carboxyltransferase N-terminal domain is found at 36-292; that stretch reads MWSKCEKCAK…LLRMHEVDYE (257 aa). 4 residues coordinate Zn(2+): Cys40, Cys43, Cys59, and Cys62. The C4-type zinc finger occupies 40 to 62; that stretch reads CEKCAKILYTEDLRENFNVCPNC.

Belongs to the AccD/PCCB family. In terms of assembly, acetyl-CoA carboxylase is a heterohexamer composed of biotin carboxyl carrier protein (AccB), biotin carboxylase (AccC) and two subunits each of ACCase subunit alpha (AccA) and ACCase subunit beta (AccD). Requires Zn(2+) as cofactor.

Its subcellular location is the cytoplasm. It carries out the reaction N(6)-carboxybiotinyl-L-lysyl-[protein] + acetyl-CoA = N(6)-biotinyl-L-lysyl-[protein] + malonyl-CoA. Its pathway is lipid metabolism; malonyl-CoA biosynthesis; malonyl-CoA from acetyl-CoA: step 1/1. Component of the acetyl coenzyme A carboxylase (ACC) complex. Biotin carboxylase (BC) catalyzes the carboxylation of biotin on its carrier protein (BCCP) and then the CO(2) group is transferred by the transcarboxylase to acetyl-CoA to form malonyl-CoA. The protein is Acetyl-coenzyme A carboxylase carboxyl transferase subunit beta of Clostridium perfringens (strain ATCC 13124 / DSM 756 / JCM 1290 / NCIMB 6125 / NCTC 8237 / Type A).